The following is a 93-amino-acid chain: Guanine nucleotide-binding protein subunit gamma (93 aa).

The tract at residues 1–22 (MPQYASRDVGDPSQIKKNKQSM) is disordered. Cys-89 carries the S-palmitoyl cysteine lipid modification. Cys-90 is modified (cysteine methyl ester). A lipid anchor (S-farnesyl cysteine) is attached at Cys-90. The propeptide at 91-93 (VVM) is removed in mature form.

This sequence belongs to the G protein gamma family. As to quaternary structure, g proteins are composed of 3 units, alpha, beta and gamma.

It is found in the membrane. This is Guanine nucleotide-binding protein subunit gamma (gng-1) from Neurospora crassa (strain ATCC 24698 / 74-OR23-1A / CBS 708.71 / DSM 1257 / FGSC 987).